The primary structure comprises 215 residues: uncharacterized protein (215 aa).

Transmembrane regions (helical) follow at residues 3-23 (LLAY…LRSI), 30-50 (ANLL…GLTW), 59-79 (LGLS…LRFW), 87-107 (WGTY…AICV), 122-142 (VSTC…SNIY), and 156-176 (VLFG…LIYV).

It belongs to the major facilitator superfamily. Allantoate permease family.

It is found in the membrane. This is an uncharacterized protein from Saccharomyces cerevisiae (strain ATCC 204508 / S288c) (Baker's yeast).